The primary structure comprises 314 residues: tRNA(Ile)-lysidine synthase, chloroplastic (314 aa).

31–36 (SGGQDS) serves as a coordination point for ATP.

It belongs to the tRNA(Ile)-lysidine synthase family.

It localises to the plastid. The protein resides in the chloroplast. It catalyses the reaction cytidine(34) in tRNA(Ile2) + L-lysine + ATP = lysidine(34) in tRNA(Ile2) + AMP + diphosphate + H(+). Ligates lysine onto the cytidine present at position 34 of the AUA codon-specific tRNA(Ile) that contains the anticodon CAU, in an ATP-dependent manner. Cytidine is converted to lysidine, thus changing the amino acid specificity of the tRNA from methionine to isoleucine. The sequence is that of tRNA(Ile)-lysidine synthase, chloroplastic from Cyanidium caldarium (Red alga).